Here is a 319-residue protein sequence, read N- to C-terminus: MATTKPYRVLLYYMYTTIENPEEFAAEHLAFCNSLELKGRILVAKEGINGTCSGTVEQTEKYMEAMNNDPRFDGIVFKIDEADGHAFKKMHVRPRPELVTLRLEDDINPHEITGKYLEPKDFYEAMKQEDTVIIDARNDYEFDLGHFKGAIKPDIESFRELPDWIRENKEVLEGKKILTYCTGGIRCEKFSGWLVREGYEDVSQLHGGIVTYGKDPEVQGELWDGQCYVFDERIAVPVNQKEHVIVGKDHFTGEPCERYVNCSNPECNKKILCSEENEAKYLRACSHECRVSPRNRYVIQHELTEEQVAAALEKIEAGK.

In terms of domain architecture, Rhodanese spans 127–221 (KQEDTVIIDA…YGKDPEVQGE (95 aa)). Cys181 serves as the catalytic Cysteine persulfide intermediate.

This sequence belongs to the TrhO family.

It carries out the reaction uridine(34) in tRNA + AH2 + O2 = 5-hydroxyuridine(34) in tRNA + A + H2O. Catalyzes oxygen-dependent 5-hydroxyuridine (ho5U) modification at position 34 in tRNAs. The protein is tRNA uridine(34) hydroxylase of Bacillus cereus (strain AH187).